A 250-amino-acid chain; its full sequence is MSCNGCRVLRKGCSENCILRPCIQWIETADAQGHATVFVAKFFGRAGLMSFISAVPDSQRPALFQSLLYEACGRTVNPVNGAIGMLWTGNWNICQAAVETVLRGGSLRPIPELLTHGGGFAGFPSPTSEEASEICTEMLNLQQNDSTDRNIYHHSRFSSSRSRSTMDSSSPTKRKRLSSEDQPSSELDLSLIPNFPIKQATPSSTRRRSVTPSMNSEDSGTTTTTTAFCDKGDVYGNGGGETTKLLNLFV.

Residues 1–107 (MSCNGCRVLR…VETVLRGGSL (107 aa)) enclose the LOB domain. Residues 145–227 (DSTDRNIYHH…DSGTTTTTTA (83 aa)) form a disordered region. A compositionally biased stretch (low complexity) spans 157-170 (FSSSRSRSTMDSSS).

It belongs to the LOB domain-containing protein family. In terms of tissue distribution, expressed in young shoots, roots, stems, leaves and flowers.

This Arabidopsis thaliana (Mouse-ear cress) protein is LOB domain-containing protein 37 (LBD37).